A 295-amino-acid chain; its full sequence is Protein FAM221A (295 aa).

Residues 272-283 (QERLLKEKEQKR) show a composition bias toward basic and acidic residues. The segment at 272-295 (QERLLKEKEQKRQKNSKPPTTNRP) is disordered.

It belongs to the FAM221 family.

In Xenopus tropicalis (Western clawed frog), this protein is Protein FAM221A (fam221a).